The following is a 517-amino-acid chain: Putative pumilio homolog 21 (517 aa).

Disordered stretches follow at residues 33 to 57 (NHQE…PPLL), 69 to 94 (KNNQ…PPLV), 107 to 130 (NHQE…PLLT), and 175 to 201 (FTPS…PPLS). Residues 42–51 (NTNINSNNNH) are compositionally biased toward low complexity. The segment covering 69-84 (KNNQEPGESGNTTINR) has biased composition (polar residues). Positions 148–502 (ESSNNNYPNL…NTLRVIQEEI (355 aa)) constitute a PUM-HD domain. Positions 177-190 (PSSLTQPDDSSSRY) are enriched in polar residues. Residues 258-293 (TTKRIFLHLATNQYGSQALRILFRRSPSLDHLLFCA) form a Pumilio 1; degenerate repeat. The stretch at 294–328 (VDTNFFLLMSDKYGRGLIIPAIRAVDKTKKESLYK) is one Pumilio 2 repeat. The Pumilio 3; degenerate repeat unit spans residues 329 to 363 (LTYEYTLHLARLETGCLALNNVLQEIRGIYRDLIF). 3 Pumilio repeats span residues 364 to 400 (ECVA…AIAE), 401 to 437 (RLRG…EEFR), and 438 to 473 (GNAK…PLLR).

Its subcellular location is the cytoplasm. Functionally, sequence-specific RNA-binding protein that regulates translation and mRNA stability by binding the 3'-UTR of target mRNAs. The chain is Putative pumilio homolog 21 (APUM21) from Arabidopsis thaliana (Mouse-ear cress).